Consider the following 577-residue polypeptide: Zona pellucida sperm-binding protein 3 receptor (577 aa).

The N-terminal stretch at 1-32 (MTAWSLHELWKTSHSTLFQVTLATVLMAPVLG) is a signal peptide. Sushi domains lie at 33–92 (DCGP…FCAR), 93–154 (KRCK…ECVI), 155–219 (ATCE…ACEK), 220–279 (IVCH…TCEP), 280–346 (NGCI…GCER), and 347–412 (VCCP…SCEA). 12 disulfides stabilise this stretch: C34/C78, C64/C90, C95/C136, C122/C152, C157/C200, C186/C217, C222/C264, C250/C277, C282/C332, C316/C344, C349/C397, and C382/C410. N72 and N81 each carry an N-linked (GlcNAc...) asparagine glycan. N144, N195, and N204 each carry an N-linked (GlcNAc...) asparagine glycan. N-linked (GlcNAc...) asparagine glycosylation is present at N335. N-linked (GlcNAc...) asparagine glycosylation is found at N426, N431, N434, N443, N462, N475, and N497. Residues 451-509 (AVCPKPEIINGNLSVEKEIYAEMENITIQCDSGYDLVGSSNIICLENRTWYPDIPFCIM) form the Sushi 7 domain. Disulfide bonds link C453–C494 and C480–C507.

As to quaternary structure, homomultimer; disulfide-linked. Post-translationally, glycosylated. Testis specific.

It localises to the cytoplasmic vesicle. It is found in the secretory vesicle. Its subcellular location is the acrosome lumen. In terms of biological role, binds to ZP3 glycoprotein in egg zona pellucida. Probably involved in interactions between sperm acrosome and egg zona pellucida during and immediately following the acrosome reaction. The sequence is that of Zona pellucida sperm-binding protein 3 receptor (Zp3r) from Rattus norvegicus (Rat).